A 69-amino-acid chain; its full sequence is Cecropin-like peptide 1 (69 aa).

Positions methionine 1 to alanine 23 are cleaved as a signal peptide. Position 68 is a glutamine amide (glutamine 68).

Following bacterial infection, expressed in fat body, trachea and muscle.

Its subcellular location is the secreted. Antimicrobial peptide active against Gram-negative bacteria E.coli KCCM 11234 (MIC&lt;=1.03 uM), E.aerogenes KCCM 12177 (MIC&lt;=2.07 uM) and P.aeruginosa KCCM 11328 (MIC&lt;=2.07 uM). Not active against various Gram-positive bacteria at concentrations up to 4.14 uM. The sequence is that of Cecropin-like peptide 1 from Hermetia illucens (Black soldier fly).